The following is a 515-amino-acid chain: Mucin-like protein Glc1.8b (515 aa).

The first 20 residues, 1–20, serve as a signal peptide directing secretion; sequence MSQITLIILVLAIGFSCTKS. Topologically, residues 21-467 are extracellular; that stretch reads HPINSTRDGE…ANDIKKPAFP (447 aa). 29 N-linked (GlcNAc...) asparagine; by host glycosylation sites follow: Asn-24, Asn-45, Asn-51, Asn-60, Asn-85, Asn-93, Asn-102, Asn-123, Asn-129, Asn-138, Asn-180, Asn-201, Asn-207, Asn-216, Asn-258, Asn-279, Asn-285, Asn-294, Asn-319, Asn-327, Asn-336, Asn-357, Asn-363, Asn-372, Asn-397, Asn-405, Asn-413, Asn-434, and Asn-441. Residues 80-114 form a disordered region; it reads SKKDENITGQSEINTSAKSQPINSTRDGEDSGTDL. Polar residues predominate over residues 86-104; sequence ITGQSEINTSAKSQPINST. The interval 314-358 is disordered; that stretch reads SKKDENITGQSEINTSAKSQPINSTRDGEDSGTDLKNLLTDPANT. Polar residues predominate over residues 320-338; that stretch reads ITGQSEINTSAKSQPINST. The tract at residues 393–413 is disordered; sequence RKDENVTGQSEFNISTNSNLN. Residues 468–488 traverse the membrane as a helical segment; that stretch reads YCIILITFQIVTVGMIIYLVF. Residues 489 to 515 lie on the Cytoplasmic side of the membrane; it reads RTMRKPCQSERAIPLNSFGFGNNSSYE.

This sequence belongs to the polydnaviridae Glc1.8 protein family.

It is found in the host membrane. In terms of biological role, involved in suppression of the insect cellular immune response. Inhibits host hemocyte adhesion and phagocytosis. The polypeptide is Mucin-like protein Glc1.8b (O16) (Microplitis demolitor (Parasitoid wasp)).